An 82-amino-acid polypeptide reads, in one-letter code: Large ribosomal subunit protein uL23 (82 aa).

This sequence belongs to the universal ribosomal protein uL23 family. As to quaternary structure, part of the 50S ribosomal subunit. Contacts protein L29.

Functionally, binds to 23S rRNA. One of the proteins that surrounds the polypeptide exit tunnel on the outside of the ribosome. The chain is Large ribosomal subunit protein uL23 from Sulfolobus acidocaldarius (strain ATCC 33909 / DSM 639 / JCM 8929 / NBRC 15157 / NCIMB 11770).